Here is a 260-residue protein sequence, read N- to C-terminus: Thiazole synthase (260 aa).

Lysine 96 acts as the Schiff-base intermediate with DXP in catalysis. 1-deoxy-D-xylulose 5-phosphate is bound by residues glycine 157, 184-185 (AG), and 206-207 (NT).

The protein belongs to the ThiG family. In terms of assembly, homotetramer. Forms heterodimers with either ThiH or ThiS.

The protein resides in the cytoplasm. The enzyme catalyses [ThiS sulfur-carrier protein]-C-terminal-Gly-aminoethanethioate + 2-iminoacetate + 1-deoxy-D-xylulose 5-phosphate = [ThiS sulfur-carrier protein]-C-terminal Gly-Gly + 2-[(2R,5Z)-2-carboxy-4-methylthiazol-5(2H)-ylidene]ethyl phosphate + 2 H2O + H(+). Its pathway is cofactor biosynthesis; thiamine diphosphate biosynthesis. Functionally, catalyzes the rearrangement of 1-deoxy-D-xylulose 5-phosphate (DXP) to produce the thiazole phosphate moiety of thiamine. Sulfur is provided by the thiocarboxylate moiety of the carrier protein ThiS. In vitro, sulfur can be provided by H(2)S. This chain is Thiazole synthase, found in Bradyrhizobium sp. (strain ORS 278).